Consider the following 617-residue polypeptide: MALLQIAEPGQSAAPHQHRLAVGIDLGTTNSLVAAVRSGVPETLKDDKGRSILPSIVHYGEESLLVGHEARELAQQDPSNTIFSVKRMMGRSLADIQQRYPHLPYQFEASDNGLPQLMTPTGKVNPVQVSAEILKTLNARAVATLGGDLEGVVITVPAYFDDAQRAGTKDAAKLANLNVLRLLNEPTAAAIAYGLDSGQEGVIAVYDLGGGTFDISVLRLSKGVFEVLATGGDSALGGDDFDHLLADWIKEQAGYIGDLTAQQMRMVQDAATDAKIALTDADTAQIDVLNWQGIVTREQFNALIQPLVKKTLMSCRRAIKDSGIEISDTIETVMVGGSTRVPLVREMVGNYFGKEPLTSIDPDKVVAIGASIQADILVGNKPDSDMLLLDVIPLSLGIETMGGMIEKIIPRNTTIPVARAQEFTTFKDGQTAMSVHVVQGEREMVSDCRSLARFTLRGIPAMTAGAAHIRVTYQVDADGLLSVTAMEKSSNVQSSIQVKPSYGLSDNEVATMIRESMTHAQDDKDARTLAEQYVEADRVLEGLITALAIDGDTLLSKEERETLEGVMMELVQLRKGTDYRSIEQGIKKTDKASQEFASRRMDKSIRQALAGQSIDEV.

It belongs to the heat shock protein 70 family.

In terms of biological role, chaperone involved in the maturation of iron-sulfur cluster-containing proteins. Has a low intrinsic ATPase activity which is markedly stimulated by HscB. This is Chaperone protein HscA homolog from Photobacterium profundum (strain SS9).